Reading from the N-terminus, the 64-residue chain is Large ribosomal subunit protein bL35 (64 aa).

Basic residues predominate over residues 1 to 28 (MSKAKTHSGAAKRFKKTASGYKHKHAFK). The segment at 1–51 (MSKAKTHSGAAKRFKKTASGYKHKHAFKSHILTKMTTKRKRQLRGTSLLNA) is disordered.

This sequence belongs to the bacterial ribosomal protein bL35 family.

In Saccharophagus degradans (strain 2-40 / ATCC 43961 / DSM 17024), this protein is Large ribosomal subunit protein bL35.